Reading from the N-terminus, the 199-residue chain is dTTP/UTP pyrophosphatase (199 aa).

D73 serves as the catalytic Proton acceptor.

It belongs to the Maf family. YhdE subfamily. Requires a divalent metal cation as cofactor.

It is found in the cytoplasm. The catalysed reaction is dTTP + H2O = dTMP + diphosphate + H(+). It carries out the reaction UTP + H2O = UMP + diphosphate + H(+). Functionally, nucleoside triphosphate pyrophosphatase that hydrolyzes dTTP and UTP. May have a dual role in cell division arrest and in preventing the incorporation of modified nucleotides into cellular nucleic acids. In Caldicellulosiruptor saccharolyticus (strain ATCC 43494 / DSM 8903 / Tp8T 6331), this protein is dTTP/UTP pyrophosphatase.